A 139-amino-acid polypeptide reads, in one-letter code: Large ribosomal subunit protein uL16 (139 aa).

This sequence belongs to the universal ribosomal protein uL16 family. As to quaternary structure, part of the 50S ribosomal subunit.

In terms of biological role, binds 23S rRNA and is also seen to make contacts with the A and possibly P site tRNAs. In Chlorobium chlorochromatii (strain CaD3), this protein is Large ribosomal subunit protein uL16.